Consider the following 360-residue polypeptide: Peptide chain release factor 1 (360 aa).

Gln235 is modified (N5-methylglutamine). The interval 284–313 (AKRQQAEASTRRNLLGSGDRSDRNRTYNFP) is disordered.

Belongs to the prokaryotic/mitochondrial release factor family. In terms of processing, methylated by PrmC. Methylation increases the termination efficiency of RF1.

The protein localises to the cytoplasm. In terms of biological role, peptide chain release factor 1 directs the termination of translation in response to the peptide chain termination codons UAG and UAA. The protein is Peptide chain release factor 1 of Escherichia coli (strain UTI89 / UPEC).